We begin with the raw amino-acid sequence, 243 residues long: Probable transcriptional regulatory protein BRE_29 (243 aa).

This sequence belongs to the TACO1 family.

It localises to the cytoplasm. The chain is Probable transcriptional regulatory protein BRE_29 from Borrelia recurrentis (strain A1).